The following is a 379-amino-acid chain: Dual-specificity RNA methyltransferase RlmN (379 aa).

Glu-95 serves as the catalytic Proton acceptor. A Radical SAM core domain is found at 101-345 (EETRGTLCVS…TTVRKTRGDD (245 aa)). Residues Cys-108 and Cys-350 are joined by a disulfide bond. [4Fe-4S] cluster-binding residues include Cys-115, Cys-119, and Cys-122. Residues 176-177 (GE), Ser-208, 230-232 (SLH), and Asn-307 each bind S-adenosyl-L-methionine. Catalysis depends on Cys-350, which acts as the S-methylcysteine intermediate.

Belongs to the radical SAM superfamily. RlmN family. Requires [4Fe-4S] cluster as cofactor.

The protein resides in the cytoplasm. It catalyses the reaction adenosine(2503) in 23S rRNA + 2 reduced [2Fe-2S]-[ferredoxin] + 2 S-adenosyl-L-methionine = 2-methyladenosine(2503) in 23S rRNA + 5'-deoxyadenosine + L-methionine + 2 oxidized [2Fe-2S]-[ferredoxin] + S-adenosyl-L-homocysteine. The catalysed reaction is adenosine(37) in tRNA + 2 reduced [2Fe-2S]-[ferredoxin] + 2 S-adenosyl-L-methionine = 2-methyladenosine(37) in tRNA + 5'-deoxyadenosine + L-methionine + 2 oxidized [2Fe-2S]-[ferredoxin] + S-adenosyl-L-homocysteine. Functionally, specifically methylates position 2 of adenine 2503 in 23S rRNA and position 2 of adenine 37 in tRNAs. m2A2503 modification seems to play a crucial role in the proofreading step occurring at the peptidyl transferase center and thus would serve to optimize ribosomal fidelity. In Burkholderia ambifaria (strain MC40-6), this protein is Dual-specificity RNA methyltransferase RlmN.